The sequence spans 247 residues: SPX domain-containing protein 5 (247 aa).

One can recognise an SPX domain in the interval 1-139; it reads MKFGKRLKRQ…GGVLRLPVIA (139 aa). The tract at residues 224–247 is disordered; the sequence is SDWLIQSVQPPPPPPPSSPLIIPT. Over residues 232–241 the composition is skewed to pro residues; that stretch reads QPPPPPPPSS.

This is SPX domain-containing protein 5 (SPX5) from Oryza sativa subsp. indica (Rice).